Consider the following 163-residue polypeptide: Putative 4-hydroxy-4-methyl-2-oxoglutarate aldolase (163 aa).

Substrate is bound by residues 76-79 (GDMI) and Arg-98. Asp-99 serves as a coordination point for a divalent metal cation.

It belongs to the class II aldolase/RraA-like family. In terms of assembly, homotrimer. It depends on a divalent metal cation as a cofactor.

The enzyme catalyses 4-hydroxy-4-methyl-2-oxoglutarate = 2 pyruvate. It carries out the reaction oxaloacetate + H(+) = pyruvate + CO2. Functionally, catalyzes the aldol cleavage of 4-hydroxy-4-methyl-2-oxoglutarate (HMG) into 2 molecules of pyruvate. Also contains a secondary oxaloacetate (OAA) decarboxylase activity due to the common pyruvate enolate transition state formed following C-C bond cleavage in the retro-aldol and decarboxylation reactions. The polypeptide is Putative 4-hydroxy-4-methyl-2-oxoglutarate aldolase (Pseudomonas fluorescens (strain Pf0-1)).